Consider the following 98-residue polypeptide: Citrate lyase acyl carrier protein (98 aa).

Ser-14 carries the post-translational modification O-(phosphoribosyl dephospho-coenzyme A)serine.

Belongs to the CitD family. In terms of assembly, oligomer with a subunit composition of (alpha,beta,gamma)6.

The protein resides in the cytoplasm. In terms of biological role, covalent carrier of the coenzyme of citrate lyase. The chain is Citrate lyase acyl carrier protein from Shigella boydii serotype 18 (strain CDC 3083-94 / BS512).